We begin with the raw amino-acid sequence, 1356 residues long: Pleckstrin homology domain-containing family H member 1 (1356 aa).

Residues phenylalanine 27 to threonine 172 adopt a coiled-coil conformation. Disordered stretches follow at residues valine 179–serine 203, histidine 256–arginine 314, and leucine 354–histidine 414. Composition is skewed to polar residues over residues proline 194–serine 203, histidine 256–glutamine 265, and valine 285–threonine 297. The stretch at serine 359–lysine 407 forms a coiled coil. Basic and acidic residues-rich tracts occupy residues serine 362 to methionine 377 and lysine 385 to leucine 399. The residue at position 451 (serine 451) is a Phosphoserine. 2 consecutive PH domains span residues alanine 572 to lysine 666 and lysine 681 to glycine 790. Serine 739 is subject to Phosphoserine. Positions tyrosine 826–leucine 980 constitute a MyTH4 domain. The 337-residue stretch at phenylalanine 991–serine 1327 folds into the FERM domain.

This is Pleckstrin homology domain-containing family H member 1 (Plekhh1) from Mus musculus (Mouse).